The chain runs to 254 residues: Leucyl/phenylalanyl-tRNA--protein transferase (254 aa).

Residues 1–10 (MSSQPPPLPW) are compositionally biased toward pro residues. The segment at 1–28 (MSSQPPPLPWLDPNQDFPPTSQAWDENS) is disordered.

Belongs to the L/F-transferase family.

It is found in the cytoplasm. It catalyses the reaction N-terminal L-lysyl-[protein] + L-leucyl-tRNA(Leu) = N-terminal L-leucyl-L-lysyl-[protein] + tRNA(Leu) + H(+). The catalysed reaction is N-terminal L-arginyl-[protein] + L-leucyl-tRNA(Leu) = N-terminal L-leucyl-L-arginyl-[protein] + tRNA(Leu) + H(+). It carries out the reaction L-phenylalanyl-tRNA(Phe) + an N-terminal L-alpha-aminoacyl-[protein] = an N-terminal L-phenylalanyl-L-alpha-aminoacyl-[protein] + tRNA(Phe). Its function is as follows. Functions in the N-end rule pathway of protein degradation where it conjugates Leu, Phe and, less efficiently, Met from aminoacyl-tRNAs to the N-termini of proteins containing an N-terminal arginine or lysine. This is Leucyl/phenylalanyl-tRNA--protein transferase from Albidiferax ferrireducens (strain ATCC BAA-621 / DSM 15236 / T118) (Rhodoferax ferrireducens).